Reading from the N-terminus, the 4243-residue chain is Fibrocystin-L (4243 aa).

The N-terminal stretch at Met-1 to Ala-20 is a signal peptide. Over Asp-21–Gln-4210 the chain is Extracellular. IPT/TIG domains follow at residues Pro-31–Gly-129, Pro-146–Tyr-255, and Ala-270–Tyr-361. Thr-122 carries O-linked (GalNAc...) threonine glycosylation. The region spanning Pro-337–Asp-492 is the PA14 domain. Thr-445 carries O-linked (GalNAc...) threonine glycosylation. 11 consecutive IPT/TIG domains span residues Pro-1067 to Phe-1151, Ser-1155 to Tyr-1234, Pro-1240 to Leu-1322, Leu-1330 to Tyr-1469, Pro-1566 to Asn-1649, Pro-1659 to Tyr-1743, Pro-1749 to Val-1828, Pro-1831 to Tyr-1910, Pro-1916 to Tyr-1997, Leu-1999 to Tyr-2085, and Pro-2091 to Tyr-2176. 2 O-linked (GalNAc...) threonine glycosylation sites follow: Thr-1803 and Thr-1839. A G8 1 domain is found at Phe-2184 to His-2304. Thr-2320 is a glycosylation site (O-linked (GalNAc...) threonine). 4 PbH1 repeats span residues Thr-2508–Asp-2530, Asn-2566–Met-2588, Gly-2665–Arg-2687, and Ser-2733–Val-2756. A G8 2 domain is found at Ser-3036–Glu-3174. 5 PbH1 repeats span residues Lys-3293–Thr-3315, Thr-3355–Gly-3377, Gly-3416–Gly-3438, Pro-3471–Thr-3493, and Ser-3527–Asp-3548. Thr-3736 is a glycosylation site (O-linked (GalNAc...) threonine). The helical transmembrane segment at Ile-4211–Ala-4231 threads the bilayer. Residues Ala-4232–Tyr-4243 lie on the Cytoplasmic side of the membrane.

The protein resides in the membrane. It is found in the cell projection. It localises to the stereocilium membrane. Functionally, component of hair-cell stereocilia coat. Required for normal hearing. This is Fibrocystin-L (PKHD1L1) from Homo sapiens (Human).